A 212-amino-acid chain; its full sequence is MEAKTLGTVTPRKPVLSVSARKIKDNAADWHNLILKWETLNDGGFATANSIANMKISLSSKDKIELASSGLASNDCAEKEHPEYSRELETLCEELQATLEGLTKIQMKMEKLSSTTKGVCELEDYHHGEERKRPPLFHTWPTAHFYEVSRKLSDMYSQELRLKRTVVEQLAHTADRDLALSYLSMWLHQPYLEAGSWLLLESMLLETGHRVL.

Met-1 bears the N-acetylmethionine mark. Phosphoserine occurs at positions 69 and 73. A coiled-coil region spans residues 74-106 (NDCAEKEHPEYSRELETLCEELQATLEGLTKIQ).

The protein belongs to the CINP family. In terms of assembly, homodimer. Part of the 55LCC heterohexameric ATPase complex composed at least of AIRIM, AFG2A, AFG2B and CINP. Interacts with AIRIM. Interacts with CDK2 and CDC7. Interacts with the components of the replication complex, MCM2, MCM3, MCM4, MCM5, MCM6, MCM7 and with ORC2-containing complexes. Interacts with ATRIP. Interacts with CEP152. Associates with pre-60S ribosomal particles. Phosphorylated by CDC7 but not by CDK2.

It localises to the nucleus. Component of the DNA replication complex, which interacts with two kinases, CDK2 and CDC7, thereby providing a functional and physical link between CDK2 and CDC7 during firing of the origins of replication. Regulates ATR-mediated checkpoint signaling in response to DNA damage. Part of the 55LCC heterohexameric ATPase complex which is chromatin-associated and promotes replisome proteostasis to maintain replication fork progression and genome stability. Required for replication fork progression, sister chromatid cohesion, and chromosome stability. The ATPase activity is specifically enhanced by replication fork DNA and is coupled to cysteine protease-dependent cleavage of replisome substrates in response to replication fork damage. Uses ATPase activity to process replisome substrates in S-phase, facilitating their proteolytic turnover from chromatin to ensure DNA replication and mitotic fidelity. As part of 55LCC complex, also involved in the cytoplasmic maturation steps of pre-60S ribosomal particles by promoting the release of shuttling protein RSL24D1/RLP24 from the pre-ribosomal particles. This is Cyclin-dependent kinase 2-interacting protein (CINP) from Bos taurus (Bovine).